A 376-amino-acid polypeptide reads, in one-letter code: Lipoprotein p33 (376 aa).

A signal peptide spans 1–30 (MKIKKIKLLKALALTGAFGIVATVPVIVYS). Cys31 is lipidated: N-palmitoyl cysteine. A lipid anchor (S-diacylglycerol cysteine) is attached at Cys31. A disordered region spans residues 35–59 (DNNGGTGDNNTGGGGSGTDQQQGTT). Positions 38–51 (GGTGDNNTGGGGSG) are enriched in gly residues.

The protein belongs to the p35 lipoprotein family.

Its subcellular location is the cell membrane. This is Lipoprotein p33 from Malacoplasma penetrans (Mycoplasma penetrans).